The following is a 116-amino-acid chain: NADPH-dependent 7-cyano-7-deazaguanine reductase (116 aa).

Residue Cys31 is the Thioimide intermediate of the active site. The active-site Proton donor is Asp38. Substrate-binding positions include 53-55 (VEL) and 72-73 (YE).

This sequence belongs to the GTP cyclohydrolase I family. QueF type 1 subfamily.

Its subcellular location is the cytoplasm. It catalyses the reaction 7-aminomethyl-7-carbaguanine + 2 NADP(+) = 7-cyano-7-deazaguanine + 2 NADPH + 3 H(+). It participates in tRNA modification; tRNA-queuosine biosynthesis. In terms of biological role, catalyzes the NADPH-dependent reduction of 7-cyano-7-deazaguanine (preQ0) to 7-aminomethyl-7-deazaguanine (preQ1). The sequence is that of NADPH-dependent 7-cyano-7-deazaguanine reductase from Chlorobium phaeobacteroides (strain DSM 266 / SMG 266 / 2430).